Reading from the N-terminus, the 121-residue chain is MWIACNLKGVPTFVWLSAKKSSHVAKLVLYNSKGYVFVTDKGPWYRKACRELNCGWIHETFGGRNVVERWFKHIKQRMKGFHKRFPHNAKYETVGLDLPLLFSLDHSTPLTLNLAISKFWK.

To M.jannaschii MJ0017 and MJ1466.

This is an uncharacterized protein from Aquifex aeolicus (strain VF5).